We begin with the raw amino-acid sequence, 59 residues long: Small ribosomal subunit protein bS21 (59 aa).

The interval 35–59 (REHYEKPSVKKKKKSEAAKRKKRNF) is disordered. The segment covering 43–59 (VKKKKKSEAAKRKKRNF) has biased composition (basic residues).

Belongs to the bacterial ribosomal protein bS21 family.

This chain is Small ribosomal subunit protein bS21, found in Finegoldia magna (strain ATCC 29328 / DSM 20472 / WAL 2508) (Peptostreptococcus magnus).